We begin with the raw amino-acid sequence, 866 residues long: DNA mismatch repair protein MutS (866 aa).

613–620 (GPNMGGKS) is an ATP binding site.

It belongs to the DNA mismatch repair MutS family.

Its function is as follows. This protein is involved in the repair of mismatches in DNA. It is possible that it carries out the mismatch recognition step. This protein has a weak ATPase activity. The chain is DNA mismatch repair protein MutS from Haemophilus ducreyi (strain 35000HP / ATCC 700724).